We begin with the raw amino-acid sequence, 366 residues long: Chorismate synthase (366 aa).

R46 lines the NADP(+) pocket. FMN contacts are provided by residues 122-124, 243-244, G284, 299-303, and R325; these read RSS, NG, and KPTPS.

It belongs to the chorismate synthase family. In terms of assembly, homotetramer. It depends on FMNH2 as a cofactor.

It carries out the reaction 5-O-(1-carboxyvinyl)-3-phosphoshikimate = chorismate + phosphate. The protein operates within metabolic intermediate biosynthesis; chorismate biosynthesis; chorismate from D-erythrose 4-phosphate and phosphoenolpyruvate: step 7/7. Functionally, catalyzes the anti-1,4-elimination of the C-3 phosphate and the C-6 proR hydrogen from 5-enolpyruvylshikimate-3-phosphate (EPSP) to yield chorismate, which is the branch point compound that serves as the starting substrate for the three terminal pathways of aromatic amino acid biosynthesis. This reaction introduces a second double bond into the aromatic ring system. This chain is Chorismate synthase, found in Campylobacter hominis (strain ATCC BAA-381 / DSM 21671 / CCUG 45161 / LMG 19568 / NCTC 13146 / CH001A).